A 227-amino-acid chain; its full sequence is Octanoyltransferase (227 aa).

One can recognise a BPL/LPL catalytic domain in the interval 31 to 209 (ANTIDEIWLV…VFLSLLGGTN (179 aa)). Residues 71 to 78 (RGGKITYH), 139 to 141 (SIG), and 152 to 154 (GLA) contribute to the substrate site. Residue C170 is the Acyl-thioester intermediate of the active site.

This sequence belongs to the LipB family.

The protein resides in the cytoplasm. It carries out the reaction octanoyl-[ACP] + L-lysyl-[protein] = N(6)-octanoyl-L-lysyl-[protein] + holo-[ACP] + H(+). It functions in the pathway protein modification; protein lipoylation via endogenous pathway; protein N(6)-(lipoyl)lysine from octanoyl-[acyl-carrier-protein]: step 1/2. Its function is as follows. Catalyzes the transfer of endogenously produced octanoic acid from octanoyl-acyl-carrier-protein onto the lipoyl domains of lipoate-dependent enzymes. Lipoyl-ACP can also act as a substrate although octanoyl-ACP is likely to be the physiological substrate. The polypeptide is Octanoyltransferase (Baumannia cicadellinicola subsp. Homalodisca coagulata).